A 95-amino-acid chain; its full sequence is uncharacterized protein (95 aa).

This is an uncharacterized protein from Homo sapiens (Human).